Consider the following 764-residue polypeptide: Polyribonucleotide nucleotidyltransferase (764 aa).

Asp-555 and Asp-561 together coordinate Mg(2+). A KH domain is found at 621–680; it reads PHITSINIPQNKIGEVIGPKGKTINQITEETGANITIEDDGTVFISAVGGESAREAEEKI. Residues 692 to 761 enclose the S1 motif domain; the sequence is GDRFLGTVVK…NRGKISLVLV (70 aa).

It belongs to the polyribonucleotide nucleotidyltransferase family. Requires Mg(2+) as cofactor.

It is found in the cytoplasm. It catalyses the reaction RNA(n+1) + phosphate = RNA(n) + a ribonucleoside 5'-diphosphate. In terms of biological role, involved in mRNA degradation. Catalyzes the phosphorolysis of single-stranded polyribonucleotides processively in the 3'- to 5'-direction. This Corynebacterium jeikeium (strain K411) protein is Polyribonucleotide nucleotidyltransferase.